The following is a 235-amino-acid chain: Orotidine 5'-phosphate decarboxylase (235 aa).

Substrate is bound by residues aspartate 17, lysine 39, 66 to 75, threonine 121, arginine 182, glutamine 191, glycine 211, and arginine 212; that span reads DLKLHDIGNT. The active-site Proton donor is the lysine 68.

Belongs to the OMP decarboxylase family. Type 1 subfamily. As to quaternary structure, homodimer.

It carries out the reaction orotidine 5'-phosphate + H(+) = UMP + CO2. It functions in the pathway pyrimidine metabolism; UMP biosynthesis via de novo pathway; UMP from orotate: step 2/2. Its function is as follows. Catalyzes the decarboxylation of orotidine 5'-monophosphate (OMP) to uridine 5'-monophosphate (UMP). This is Orotidine 5'-phosphate decarboxylase from Rhodopseudomonas palustris (strain BisB5).